We begin with the raw amino-acid sequence, 117 residues long: MPRAKSSVVSRKRHKKILKLAKGYRGAKSKLYRIANQQVMKSLVYAYRDRKARKRDFRKLWITRINAAARMNGISYSRLMNGLKLAGVDINRKMLADMAVNDAQAFGRLVEIAKAKL.

This sequence belongs to the bacterial ribosomal protein bL20 family.

Its function is as follows. Binds directly to 23S ribosomal RNA and is necessary for the in vitro assembly process of the 50S ribosomal subunit. It is not involved in the protein synthesizing functions of that subunit. This Pelotomaculum thermopropionicum (strain DSM 13744 / JCM 10971 / SI) protein is Large ribosomal subunit protein bL20.